The chain runs to 407 residues: L-cysteine:1D-myo-inositol 2-amino-2-deoxy-alpha-D-glucopyranoside ligase (407 aa).

The segment at 1 to 22 (MRSWSAPDIVPLPGTGGPLRVH) is disordered. Residue Cys43 participates in Zn(2+) binding. Residues 43–46 (CGIT), Thr58, and 81–83 (NTT) each bind L-cysteinyl-5'-AMP. The 'HIGH' region motif lies at 45–55 (ITPYDAAHLGH). Residues 183-188 (ERGGDP) carry the 'ERGGDP' region motif. Residue Trp223 coordinates L-cysteinyl-5'-AMP. Cys227 lines the Zn(2+) pocket. 245-247 (GSD) provides a ligand contact to L-cysteinyl-5'-AMP. His252 contributes to the Zn(2+) binding site. Residue Val278 participates in L-cysteinyl-5'-AMP binding. The 'KMSKS' region signature appears at 284–288 (KMSKS).

This sequence belongs to the class-I aminoacyl-tRNA synthetase family. MshC subfamily. In terms of assembly, monomer. Requires Zn(2+) as cofactor.

The enzyme catalyses 1D-myo-inositol 2-amino-2-deoxy-alpha-D-glucopyranoside + L-cysteine + ATP = 1D-myo-inositol 2-(L-cysteinylamino)-2-deoxy-alpha-D-glucopyranoside + AMP + diphosphate + H(+). Functionally, catalyzes the ATP-dependent condensation of GlcN-Ins and L-cysteine to form L-Cys-GlcN-Ins. This chain is L-cysteine:1D-myo-inositol 2-amino-2-deoxy-alpha-D-glucopyranoside ligase, found in Nocardiopsis dassonvillei (strain ATCC 23218 / DSM 43111 / CIP 107115 / JCM 7437 / KCTC 9190 / NBRC 14626 / NCTC 10488 / NRRL B-5397 / IMRU 509) (Actinomadura dassonvillei).